The sequence spans 2491 residues: MGAAAGRSPHLGPAPARRPQRSLLLLQLLLLVAAPGSTQAQAAPFPELCSYTWEAVDTKNNVLYKINICGSVDIVQCGPSSAVCMHDLKTRTYHSVGDSVLRSATRSLLEFNTTVSCDQQGTNHRVQSSIAFLCGKTLGTPEFVTATECVHYFEWRTTAACKKDIFKANKEVPCYVFDEELRKHDLNPLIKLSGAYLVDDSDPDTSLFINVCRDIDTLRDPGSQLRACPPGTAACLVRGHQAFDVGQPRDGLKLVRKDRLVLSYVREEAGKLDFCDGHSPAVTITFVCPSERREGTIPKLTAKSNCRYEIEWITEYACHRDYLESKTCSLSGEQQDVSIDLTPLAQSGGSSYISDGKEYLFYLNVCGETEIQFCNKKQAAVCQVKKSDTSQVKAAGRYHNQTLRYSDGDLTLIYFGGDECSSGFQRMSVINFECNKTAGNDGKGTPVFTGEVDCTYFFTWDTEYACVKEKEDLLCGATDGKKRYDLSALVRHAEPEQNWEAVDGSQTETEKKHFFINICHRVLQEGKARGCPEDAAVCAVDKNGSKNLGKFISSPMKEKGNIQLSYSDGDDCGHGKKIKTNITLVCKPGDLESAPVLRTSGEGGCFYEFEWHTAAACVLSKTEGENCTVFDSQAGFSFDLSPLTKKNGAYKVETKKYDFYINVCGPVSVSPCQPDSGACQVAKSDEKTWNLGLSNAKLSYYDGMIQLNYRGGTPYNNERHTPRATLITFLCDRDAGVGFPEYQEEDNSTYNFRWYTSYACPEEPLECVVTDPSTLEQYDLSSLAKSEGGLGGNWYAMDNSGEHVTWRKYYINVCRPLNPVPGCNRYASACQMKYEKDQGSFTEVVSISNLGMAKTGPVVEDSGSLLLEYVNGSACTTSDGRQTTYTTRIHLVCSRGRLNSHPIFSLNWECVVSFLWNTEAACPIQTTTDTDQACSIRDPNSGFVFNLNPLNSSQGYNVSGIGKIFMFNVCGTMPVCGTILGKPASGCEAETQTEELKNWKPARPVGIEKSLQLSTEGFITLTYKGPLSAKGTADAFIVRFVCNDDVYSGPLKFLHQDIDSGQGIRNTYFEFETALACVPSPVDCQVTDLAGNEYDLTGLSTVRKPWTAVDTSVDGRKRTFYLSVCNPLPYIPGCQGSAVGSCLVSEGNSWNLGVVQMSPQAAANGSLSIMYVNGDKCGNQRFSTRITFECAQISGSPAFQLQDGCEYVFIWRTVEACPVVRVEGDNCEVKDPRHGNLYDLKPLGLNDTIVSAGEYTYYFRVCGKLSSDVCPTSDKSKVVSSCQEKREPQGFHKVAGLLTQKLTYENGLLKMNFTGGDTCHKVYQRSTAIFFYCDRGTQRPVFLKETSDCSYLFEWRTQYACPPFDLTECSFKDGAGNSFDLSSLSRYSDNWEAITGTGDPEHYLINVCKSLAPQAGTEPCPPEAAACLLGGSKPVNLGRVRDGPQWRDGIIVLKYVDGDLCPDGIRKKSTTIRFTCSESQVNSRPMFISAVEDCEYTFAWPTATACPMKSNEHDDCQVTNPSTGHLFDLSSLSGRAGFTAAYSEKGLVYMSICGENENCPPGVGACFGQTRISVGKANKRLRYVDQVLQLVYKDGSPCPSKSGLSYKSVISFVCRPEARPTNRPMLISLDKQTCTLFFSWHTPLACEQATECSVRNGSSIVDLSPLIHRTGGYEAYDESEDDASDTNPDFYINICQPLNPMHGVPCPAGAAVCKVPIDGPPIDIGRVAGPPILNPIANEIYLNFESSTPCLADKHFNYTSLIAFHCKRGVSMGTPKLLRTSECDFVFEWETPVVCPDEVRMDGCTLTDEQLLYSFNLSSLSTSTFKVTRDSRTYSVGVCTFAVGPEQGGCKDGGVCLLSGTKGASFGRLQSMKLDYRHQDEAVVLSYVNGDRCPPETDDGVPCVFPFIFNGKSYEECIIESRAKLWCSTTADYDRDHEWGFCRHSNSYRTSSIIFKCDEDEDIGRPQVFSEVRGCDVTFEWKTKVVCPPKKLECKFVQKHKTYDLRLLSSLTGSWSLVHNGVSYYINLCQKIYKGPLGCSERASICRRTTTGDVQVLGLVHTQKLGVIGDKVVVTYSKGYPCGGNKTASSVIELTCTKTVGRPAFKRFDIDSCTYYFSWDSRAACAVKPQEVQMVNGTITNPINGKSFSLGDIYFKLFRASGDMRTNGDNYLYEIQLSSITSSRNPACSGANICQVKPNDQHFSRKVGTSDKTKYYLQDGDLDVVFASSSKCGKDKTKSVSSTIFFHCDPLVEDGIPEFSHETADCQYLFSWYTSAVCPLGVGFDSENPGDDGQMHKGLSERSQAVGAVLSLLLVALTCCLLALLLYKKERRETVISKLTTCCRRSSNVSYKYSKVNKEEETDENETEWLMEEIQLPPPRQGKEGQENGHITTKSVKALSSLHGDDQDSEDEVLTIPEVKVHSGRGAGAESSHPVRNAQSNALQEREDDRVGLVRGEKARKGKSSSAQQKTVSSTKLVSFHDDSDEDLLHI.

The first 40 residues, 1 to 40 (MGAAAGRSPHLGPAPARRPQRSLLLLQLLLLVAAPGSTQA), serve as a signal peptide directing secretion. The Lumenal segment spans residues 41-2304 (QAAPFPELCS…MHKGLSERSQ (2264 aa)). MRH domains follow at residues 47–163 (ELCS…ACKK), 172–320 (VPCY…ACHR), 326–468 (KTCS…ACVK), 473–619 (LLCG…ACVL), 625–762 (ENCT…ACPE), 765–924 (LECV…ACPI), 932–1079 (QACS…ACVP), 1082–1219 (VDCQ…ACPV), 1225–1363 (DNCE…ACPP), 1367–1508 (TECS…ACPM), 1514–1648 (DDCQ…ACEQ), and 1650–1797 (TECS…VCPD). 2 disulfide bridges follow: Cys-49-Cys-69 and Cys-77-Cys-84. Asn-112 carries an N-linked (GlcNAc...) asparagine glycan. 8 cysteine pairs are disulfide-bonded: Cys-117–Cys-149, Cys-134–Cys-161, Cys-174–Cys-212, Cys-228–Cys-235, Cys-275–Cys-306, Cys-288–Cys-318, Cys-328–Cys-366, and Cys-374–Cys-382. Residues Asn-400 and Asn-435 are each glycosylated (N-linked (GlcNAc...) asparagine). 4 disulfides stabilise this stretch: Cys-420–Cys-454, Cys-434–Cys-466, Cys-475–Cys-519, and Cys-531–Cys-538. N-linked (GlcNAc...) asparagine glycans are attached at residues Asn-543 and Asn-581. 2 cysteine pairs are disulfide-bonded: Cys-572–Cys-605 and Cys-586–Cys-617. An N-linked (GlcNAc...) asparagine glycan is attached at Asn-626. 5 disulfide bridges follow: Cys-627-Cys-664, Cys-672-Cys-679, Cys-731-Cys-760, Cys-767-Cys-814, and Cys-823-Cys-830. N-linked (GlcNAc...) asparagine glycosylation occurs at Asn-747. Asn-871 carries N-linked (GlcNAc...) asparagine glycosylation. Cystine bridges form between Cys-875–Cys-910, Cys-893–Cys-922, Cys-934–Cys-970, Cys-976–Cys-987, Cys-1042–Cys-1077, Cys-1084–Cys-1125, and Cys-1134–Cys-1142. Asn-951 and Asn-957 each carry an N-linked (GlcNAc...) asparagine glycan. Residue Asn-1164 is glycosylated (N-linked (GlcNAc...) asparagine). Disulfide bonds link Cys-1177/Cys-1205, Cys-1190/Cys-1217, Cys-1227/Cys-1262, and Cys-1270/Cys-1282. An N-linked (GlcNAc...) asparagine glycan is attached at Asn-1246. Residue Asn-1312 is glycosylated (N-linked (GlcNAc...) asparagine). 24 disulfide bridges follow: Cys-1319-Cys-1349, Cys-1333-Cys-1361, Cys-1369-Cys-1408, Cys-1420-Cys-1427, Cys-1461-Cys-1494, Cys-1476-Cys-1506, Cys-1516-Cys-1553, Cys-1559-Cys-1566, Cys-1598-Cys-1634, Cys-1614-Cys-1646, Cys-1652-Cys-1695, Cys-1706-Cys-1713, Cys-1750-Cys-1783, Cys-1766-Cys-1795, Cys-1804-Cys-1839, Cys-1850-Cys-1856, Cys-1893-Cys-1975, Cys-1903-Cys-1927, Cys-1917-Cys-1942, Cys-1957-Cys-1987, Cys-1994-Cys-2029, Cys-2039-Cys-2046, Cys-2082-Cys-2113, and Cys-2096-Cys-2125. N-linked (GlcNAc...) asparagine glycosylation occurs at Asn-1656. An N-linked (GlcNAc...) asparagine glycan is attached at Asn-1757. The 188-residue stretch at 1802–1989 (DGCTLTDEQL…EWKTKVVCPP (188 aa)) folds into the Fibronectin type-II domain. A glycan (N-linked (GlcNAc...) asparagine) is linked at Asn-1816. 2 consecutive MRH domains span residues 1992–2127 (LECK…ACAV) and 2135–2280 (VNGT…VCPL). The N-linked (GlcNAc...) asparagine glycan is linked to Asn-2085. Residue Asn-2136 is glycosylated (N-linked (GlcNAc...) asparagine). Cystine bridges form between Cys-2188/Cys-2194, Cys-2232/Cys-2266, and Cys-2248/Cys-2278. The chain crosses the membrane as a helical span at residues 2305 to 2327 (AVGAVLSLLLVALTCCLLALLLY). The Cytoplasmic portion of the chain corresponds to 2328-2491 (KKERRETVIS…DDSDEDLLHI (164 aa)). An N6-acetyllysine modification is found at Lys-2352. Position 2409 is a phosphoserine (Ser-2409). The tract at residues 2424–2491 (GRGAGAESSH…DDSDEDLLHI (68 aa)) is disordered. Arg-2425 bears the Omega-N-methylarginine mark. The segment covering 2444 to 2459 (QEREDDRVGLVRGEKA) has biased composition (basic and acidic residues). Residues 2464–2477 (SSSAQQKTVSSTKL) show a composition bias toward polar residues. 2 positions are modified to phosphoserine: Ser-2479 and Ser-2484. A compositionally biased stretch (basic and acidic residues) spans 2479 to 2491 (SFHDDSDEDLLHI).

The protein belongs to the MRL1/IGF2R family. As to quaternary structure, binds HA-I and HA-II plasma membrane adapters. Interacts with DPP4; the interaction is direct. Binds GGA1, GGA2 and GGA3. Interacts with the heterotrimeric retromer cargo-selective complex (CSC), formed by VPS26 (VPS26A or VPS26B), VPS29 and VPS35; which is involved in retrograde trafficking of the receptor from endosomes to the Golgi apparatus. Post-translationally, palmitoylated. Undergoes cysteine S-palmitoylation which promotes interaction with the retromer cargo-selective complex which mediates its retrograde trafficking to the Golgi apparatus.

Its subcellular location is the golgi apparatus membrane. The protein resides in the endosome membrane. Its function is as follows. Mediates the transport of phosphorylated lysosomal enzymes from the Golgi complex and the cell surface to lysosomes. Lysosomal enzymes bearing phosphomannosyl residues bind specifically to mannose-6-phosphate receptors in the Golgi apparatus and the resulting receptor-ligand complex is transported to an acidic prelysosomal compartment where the low pH mediates the dissociation of the complex. The receptor is then recycled back to the Golgi for another round of trafficking through its binding to the retromer. This receptor also binds IGF2. Acts as a positive regulator of T-cell coactivation by binding DPP4. The polypeptide is Cation-independent mannose-6-phosphate receptor (IGF2R) (Homo sapiens (Human)).